The sequence spans 139 residues: Nucleoside diphosphate kinase (139 aa).

Lysine 10, phenylalanine 58, arginine 86, threonine 92, arginine 103, and asparagine 113 together coordinate ATP. Catalysis depends on histidine 116, which acts as the Pros-phosphohistidine intermediate.

Belongs to the NDK family. In terms of assembly, homotetramer. Mg(2+) serves as cofactor.

The protein localises to the cytoplasm. It catalyses the reaction a 2'-deoxyribonucleoside 5'-diphosphate + ATP = a 2'-deoxyribonucleoside 5'-triphosphate + ADP. It carries out the reaction a ribonucleoside 5'-diphosphate + ATP = a ribonucleoside 5'-triphosphate + ADP. In terms of biological role, major role in the synthesis of nucleoside triphosphates other than ATP. The ATP gamma phosphate is transferred to the NDP beta phosphate via a ping-pong mechanism, using a phosphorylated active-site intermediate. The chain is Nucleoside diphosphate kinase from Caulobacter sp. (strain K31).